The primary structure comprises 147 residues: Protein-export protein SecB (147 aa).

Belongs to the SecB family. In terms of assembly, homotetramer, a dimer of dimers. One homotetramer interacts with 1 SecA dimer.

It is found in the cytoplasm. In terms of biological role, one of the proteins required for the normal export of preproteins out of the cell cytoplasm. It is a molecular chaperone that binds to a subset of precursor proteins, maintaining them in a translocation-competent state. It also specifically binds to its receptor SecA. This is Protein-export protein SecB from Neisseria meningitidis serogroup A / serotype 4A (strain DSM 15465 / Z2491).